The following is a 489-amino-acid chain: MNTTAPTGLLQQPRPFFMIFFVELWERFGYYGVQGILAVFFVKQLGFSQEQAFITFGAFAALVYGLISIGGYVGDHLLGTKRTLVLGAIVLAIGYFMTGMSLLNPDLIFIALGTIAVGNGLFKANPASLLSKCYQPKDPRLDGAFTLFYMSINIGSLLSLSLAPVIADKFGYAVTYNLCGAGLIVALLVYFACRGMVKNIGSEPDHKPLRFRNLLLVLLGTVVMIFLCAWLMHNVKIANLVLIVLSIVVTIFFFREAFRLDKTGRNKMFVAFILMIEAVLFYILYAQMPTSLNFFAINNVHHEILGFAINPVSFQALNPFWVVVASPVLAAIYTRLGSKGKDLTMPMKFTLGMFLCALGFLTAAAGMWFADAQGLTSPWFIVLVYLFQSLGELLISALGLAMVAALVPQHLMGFILGMWFLTQAAAFLLGGYVATFTAVPENITDPLQTLPIYTGVFSKIGLVTLAVTVVMAIMVPWLNRMINTPGTEQ.

Residues 1–27 (MNTTAPTGLLQQPRPFFMIFFVELWER) are Cytoplasmic-facing. Residues 28–48 (FGYYGVQGILAVFFVKQLGFS) traverse the membrane as a helical segment. The Periplasmic portion of the chain corresponds to 49 to 52 (QEQA). The chain crosses the membrane as a helical span at residues 53–73 (FITFGAFAALVYGLISIGGYV). The Cytoplasmic portion of the chain corresponds to 74–82 (GDHLLGTKR). A helical membrane pass occupies residues 83–103 (TLVLGAIVLAIGYFMTGMSLL). At 104–106 (NPD) the chain is on the periplasmic side. A helical transmembrane segment spans residues 107–127 (LIFIALGTIAVGNGLFKANPA). Over 128–146 (SLLSKCYQPKDPRLDGAFT) the chain is Cytoplasmic. A helical membrane pass occupies residues 147-167 (LFYMSINIGSLLSLSLAPVIA). The Periplasmic portion of the chain corresponds to 168 to 172 (DKFGY). Residues 173-193 (AVTYNLCGAGLIVALLVYFAC) traverse the membrane as a helical segment. The Cytoplasmic portion of the chain corresponds to 194–214 (RGMVKNIGSEPDHKPLRFRNL). The chain crosses the membrane as a helical span at residues 215–235 (LLVLLGTVVMIFLCAWLMHNV). A topological domain (periplasmic) is located at residue Lys-236. A helical transmembrane segment spans residues 237-257 (IANLVLIVLSIVVTIFFFREA). The Cytoplasmic portion of the chain corresponds to 258–267 (FRLDKTGRNK). A helical membrane pass occupies residues 268 to 288 (MFVAFILMIEAVLFYILYAQM). Topologically, residues 289–315 (PTSLNFFAINNVHHEILGFAINPVSFQ) are periplasmic. Residues 316 to 338 (ALNPFWVVVASPVLAAIYTRLGS) traverse the membrane as a helical segment. The Cytoplasmic segment spans residues 339-348 (KGKDLTMPMK). A helical membrane pass occupies residues 349 to 369 (FTLGMFLCALGFLTAAAGMWF). The Periplasmic portion of the chain corresponds to 370–379 (ADAQGLTSPW). The chain crosses the membrane as a helical span at residues 380 to 400 (FIVLVYLFQSLGELLISALGL). The Cytoplasmic portion of the chain corresponds to 401–410 (AMVAALVPQH). The helical transmembrane segment at 411–431 (LMGFILGMWFLTQAAAFLLGG) threads the bilayer. Residues 432 to 454 (YVATFTAVPENITDPLQTLPIYT) are Periplasmic-facing. The helical transmembrane segment at 455-475 (GVFSKIGLVTLAVTVVMAIMV) threads the bilayer. Residues 476–489 (PWLNRMINTPGTEQ) are Cytoplasmic-facing.

This sequence belongs to the major facilitator superfamily. Proton-dependent oligopeptide transporter (POT/PTR) (TC 2.A.17) family. DtpB subfamily.

The protein localises to the cell inner membrane. Its function is as follows. Proton-dependent permease that transports di- and tripeptides. The protein is Dipeptide and tripeptide permease B of Salmonella typhimurium (strain LT2 / SGSC1412 / ATCC 700720).